Reading from the N-terminus, the 331-residue chain is Methionyl-tRNA formyltransferase (331 aa).

Residue 110–113 (SLLP) participates in (6S)-5,6,7,8-tetrahydrofolate binding. The interval 312–331 (HAPAERVSAAGSPAGAGGAP) is disordered.

The protein belongs to the Fmt family.

The enzyme catalyses L-methionyl-tRNA(fMet) + (6R)-10-formyltetrahydrofolate = N-formyl-L-methionyl-tRNA(fMet) + (6S)-5,6,7,8-tetrahydrofolate + H(+). Its function is as follows. Attaches a formyl group to the free amino group of methionyl-tRNA(fMet). The formyl group appears to play a dual role in the initiator identity of N-formylmethionyl-tRNA by promoting its recognition by IF2 and preventing the misappropriation of this tRNA by the elongation apparatus. The protein is Methionyl-tRNA formyltransferase of Frankia alni (strain DSM 45986 / CECT 9034 / ACN14a).